Here is a 627-residue protein sequence, read N- to C-terminus: Chaperone protein HtpG (627 aa).

Positions 1–339 (MKGQETRGFQ…SNDLPLNVSR (339 aa)) are a; substrate-binding. The b stretch occupies residues 340–555 (EILQDSRVTQ…ADEMSTQMAK (216 aa)). Residues 556–627 (LFAAAGQQAP…IRRMNQLLSA (72 aa)) form a c region.

Belongs to the heat shock protein 90 family. Homodimer.

It localises to the cytoplasm. Molecular chaperone. Has ATPase activity. The protein is Chaperone protein HtpG of Pectobacterium atrosepticum (strain SCRI 1043 / ATCC BAA-672) (Erwinia carotovora subsp. atroseptica).